A 165-amino-acid chain; its full sequence is Ribosome maturation factor RimM (165 aa).

The region spanning 94–165 (EDEFYIADLT…YVILNYQREA (72 aa)) is the PRC barrel domain.

The protein belongs to the RimM family. In terms of assembly, binds ribosomal protein uS19.

The protein resides in the cytoplasm. An accessory protein needed during the final step in the assembly of 30S ribosomal subunit, possibly for assembly of the head region. Essential for efficient processing of 16S rRNA. May be needed both before and after RbfA during the maturation of 16S rRNA. It has affinity for free ribosomal 30S subunits but not for 70S ribosomes. This chain is Ribosome maturation factor RimM, found in Rickettsia conorii (strain ATCC VR-613 / Malish 7).